The primary structure comprises 231 residues: ATP phosphoribosyltransferase (231 aa).

This sequence belongs to the ATP phosphoribosyltransferase family. Short subfamily. In terms of assembly, heteromultimer composed of HisG and HisZ subunits.

It localises to the cytoplasm. The enzyme catalyses 1-(5-phospho-beta-D-ribosyl)-ATP + diphosphate = 5-phospho-alpha-D-ribose 1-diphosphate + ATP. It functions in the pathway amino-acid biosynthesis; L-histidine biosynthesis; L-histidine from 5-phospho-alpha-D-ribose 1-diphosphate: step 1/9. Its function is as follows. Catalyzes the condensation of ATP and 5-phosphoribose 1-diphosphate to form N'-(5'-phosphoribosyl)-ATP (PR-ATP). Has a crucial role in the pathway because the rate of histidine biosynthesis seems to be controlled primarily by regulation of HisG enzymatic activity. This Brucella suis biovar 1 (strain 1330) protein is ATP phosphoribosyltransferase.